Reading from the N-terminus, the 403-residue chain is Argininosuccinate synthase (403 aa).

ATP is bound by residues 12-20 and alanine 39; that span reads AYSGGLDTS. L-citrulline is bound by residues tyrosine 90 and serine 95. Glycine 120 lines the ATP pocket. L-aspartate is bound by residues threonine 122, asparagine 126, and aspartate 127. Asparagine 126 contributes to the L-citrulline binding site. Positions 130, 182, 191, 267, and 279 each coordinate L-citrulline.

This sequence belongs to the argininosuccinate synthase family. Type 1 subfamily. In terms of assembly, homotetramer.

The protein localises to the cytoplasm. The catalysed reaction is L-citrulline + L-aspartate + ATP = 2-(N(omega)-L-arginino)succinate + AMP + diphosphate + H(+). It functions in the pathway amino-acid biosynthesis; L-arginine biosynthesis; L-arginine from L-ornithine and carbamoyl phosphate: step 2/3. The sequence is that of Argininosuccinate synthase from Ruthia magnifica subsp. Calyptogena magnifica.